The sequence spans 174 residues: Cytochrome c-type biogenesis protein CcmE (174 aa).

Topologically, residues 1–7 (MTRKSRR) are cytoplasmic. Residues 8–28 (LILIGAGLGVLALAAGLILTA) traverse the membrane as a helical; Signal-anchor for type II membrane protein segment. Topologically, residues 29–174 (LNDTIVFFRT…PAVSPARSTP (146 aa)) are periplasmic. Residues His-121 and Tyr-125 each coordinate heme. Over residues 130–144 (VADALKKSGHWKEGE) the composition is skewed to basic and acidic residues. Residues 130-174 (VADALKKSGHWKEGEEGGPVPPAAKTPGPQSSAAPPAVSPARSTP) form a disordered region. The span at 156-174 (PGPQSSAAPPAVSPARSTP) shows a compositional bias: low complexity.

This sequence belongs to the CcmE/CycJ family.

It localises to the cell inner membrane. In terms of biological role, heme chaperone required for the biogenesis of c-type cytochromes. Transiently binds heme delivered by CcmC and transfers the heme to apo-cytochromes in a process facilitated by CcmF and CcmH. This chain is Cytochrome c-type biogenesis protein CcmE, found in Azorhizobium caulinodans (strain ATCC 43989 / DSM 5975 / JCM 20966 / LMG 6465 / NBRC 14845 / NCIMB 13405 / ORS 571).